We begin with the raw amino-acid sequence, 123 residues long: Chaperone protein SycN (123 aa).

Interacts with YscB to form a complex which specifically binds to YopN.

Its subcellular location is the cytoplasm. It is found in the cell inner membrane. Its function is as follows. Functions as a specific chaperone for YopN. It could facilitate the secretion and the subsequent translocation of YopN. The chain is Chaperone protein SycN (sycN) from Yersinia enterocolitica.